A 136-amino-acid polypeptide reads, in one-letter code: Succinate dehydrogenase assembly factor 3, mitochondrial (136 aa).

A mitochondrion-targeting transit peptide spans 1–24 (MRASMVRRMAAAASSSASSSLRPA).

The protein belongs to the complex I LYR family. SDHAF3 subfamily. In terms of assembly, interacts with the iron-sulfur protein subunit within the SDH catalytic dimer.

Its subcellular location is the mitochondrion matrix. In terms of biological role, plays an essential role in the assembly of succinate dehydrogenase (SDH), an enzyme complex (also referred to as respiratory complex II) that is a component of both the tricarboxylic acid (TCA) cycle and the mitochondrial electron transport chain, and which couples the oxidation of succinate to fumarate with the reduction of ubiquinone (coenzyme Q) to ubiquinol. Promotes maturation of the iron-sulfur protein subunit of the SDH catalytic dimer, protecting it from the deleterious effects of oxidants. May act together with SDHAF1. The sequence is that of Succinate dehydrogenase assembly factor 3, mitochondrial from Pyricularia oryzae (strain 70-15 / ATCC MYA-4617 / FGSC 8958) (Rice blast fungus).